The sequence spans 87 residues: MKIKTTVAALSVLSVLSFGAFAADSIDAAQAQNREAIGTVSVSGVASSPMDMREMLNKKAEEKGATAYQITEARSGDTWHATAELYK.

A signal peptide spans 1–22 (MKIKTTVAALSVLSVLSFGAFA).

This sequence belongs to the BhsA/McbA family.

It localises to the periplasm. This is an uncharacterized protein from Escherichia coli O6:H1 (strain CFT073 / ATCC 700928 / UPEC).